We begin with the raw amino-acid sequence, 458 residues long: Argininosuccinate lyase (458 aa).

This sequence belongs to the lyase 1 family. Argininosuccinate lyase subfamily.

The protein localises to the cytoplasm. The catalysed reaction is 2-(N(omega)-L-arginino)succinate = fumarate + L-arginine. The protein operates within amino-acid biosynthesis; L-arginine biosynthesis; L-arginine from L-ornithine and carbamoyl phosphate: step 3/3. This is Argininosuccinate lyase from Actinobacillus pleuropneumoniae serotype 3 (strain JL03).